The primary structure comprises 267 residues: MVTSEFKLFKFMLMGMSIAVALALSGPCRAFDIKGGVSKESGPFDLFKFGFKAYKNGQKEEAVEAYRYAAEKGHTGSRWALANMYADGDGVTQDDFEAFKIYSEIAQQGVEPGSEDTGFFVNALLSLANYYKHGIAGSPVRIDLSQARQLYFQVASTFGVPEAQFQLAQMMLAGEGGNASPQQAKKWLNQARKSGHPGAMAVFGNILFDEGQTARGLALMTAALDRCKPKDCGWMEALQEQAFSVANEADRRTAVSLSHSIATGSDD.

The N-terminal stretch at 1–23 (MVTSEFKLFKFMLMGMSIAVALA) is a signal peptide.

Its function is as follows. Negatively modulates exopolysaccharide (EPS) biosynthesis. The chain is Exopolysaccharide production negative regulator (exoR) from Rhizobium leguminosarum bv. viciae.